The following is a 359-amino-acid chain: F-box protein At5g49610 (359 aa).

In terms of domain architecture, F-box spans Asn3–Leu52.

As to quaternary structure, part of a SCF (SKP1-cullin-F-box) protein ligase complex. Interacts with SKP1A, SKP1B, ASK11, ASK12, ASK13 and ASK14.

It participates in protein modification; protein ubiquitination. The polypeptide is F-box protein At5g49610 (Arabidopsis thaliana (Mouse-ear cress)).